Here is a 100-residue protein sequence, read N- to C-terminus: Small ribosomal subunit protein uS14c (100 aa).

It belongs to the universal ribosomal protein uS14 family. In terms of assembly, part of the 30S ribosomal subunit.

It localises to the plastid. The protein localises to the chloroplast. In terms of biological role, binds 16S rRNA, required for the assembly of 30S particles. The polypeptide is Small ribosomal subunit protein uS14c (Pyropia yezoensis (Susabi-nori)).